Reading from the N-terminus, the 72-residue chain is Translation initiation factor IF-1 (72 aa).

An S1-like domain is found at 1–72 (MSKEDHIEME…SKARITFRHR (72 aa)).

Belongs to the IF-1 family. Component of the 30S ribosomal translation pre-initiation complex which assembles on the 30S ribosome in the order IF-2 and IF-3, IF-1 and N-formylmethionyl-tRNA(fMet); mRNA recruitment can occur at any time during PIC assembly.

It is found in the cytoplasm. In terms of biological role, one of the essential components for the initiation of protein synthesis. Stabilizes the binding of IF-2 and IF-3 on the 30S subunit to which N-formylmethionyl-tRNA(fMet) subsequently binds. Helps modulate mRNA selection, yielding the 30S pre-initiation complex (PIC). Upon addition of the 50S ribosomal subunit IF-1, IF-2 and IF-3 are released leaving the mature 70S translation initiation complex. This is Translation initiation factor IF-1 from Methylococcus capsulatus (strain ATCC 33009 / NCIMB 11132 / Bath).